A 459-amino-acid polypeptide reads, in one-letter code: Argininosuccinate lyase (459 aa).

This sequence belongs to the lyase 1 family. Argininosuccinate lyase subfamily.

Its subcellular location is the cytoplasm. The catalysed reaction is 2-(N(omega)-L-arginino)succinate = fumarate + L-arginine. Its pathway is amino-acid biosynthesis; L-arginine biosynthesis; L-arginine from L-ornithine and carbamoyl phosphate: step 3/3. This Staphylococcus aureus (strain bovine RF122 / ET3-1) protein is Argininosuccinate lyase.